We begin with the raw amino-acid sequence, 610 residues long: Calmegin (610 aa).

An N-terminal signal peptide occupies residues 1-19 (MHFQAFWLCLGLLFISINA). The Lumenal portion of the chain corresponds to 20-471 (EFMDDDVETE…LMAAAEGHPW (452 aa)). Lys-128 carries the post-translational modification N6-acetyllysine. An intrachain disulfide couples Cys-151 to Cys-185. The interval 258 to 338 (VPPIKPPKEI…KPDDWNEDTD (81 aa)) is disordered. Over residues 263-284 (PPKEIEDPNDKKPEEWDERAKI) the composition is skewed to basic and acidic residues. Repeat copies occupy residues 267–280 (IEDP…EWDE), 284–297 (IPDP…DWDE), 303–316 (IEDS…GWLD), 322–335 (IPDP…DWNE), 339–352 (GEWE…PACR), 356–369 (GEWK…PKYK), 370–383 (GVWR…PNYQ), and 384–397 (GIWS…PDYF). A compositionally biased stretch (basic and acidic residues) spans 317–332 (DEPKFIPDPNAEKPDD). The interaction with PPIB stretch occupies residues 317–350 (DEPKFIPDPNAEKPDDWNEDTDGEWEAPQILNPA). Cys-351 and Cys-355 form a disulfide bridge. A helical membrane pass occupies residues 472-492 (LWLIYLVTAGVPIALITSFCW). The Cytoplasmic portion of the chain corresponds to 493-610 (PRKVKKKHKD…SVRKRRVRKD (118 aa)). Positions 521 to 548 (QEEKEEKAALEKPMDLEEEKKQNDGEML) are enriched in basic and acidic residues. The interval 521 to 610 (QEEKEEKAAL…SVRKRRVRKD (90 aa)) is disordered. Residues 549–571 (EKEEESEPEEKSEEEIEIIEGQE) are compositionally biased toward acidic residues. 7 positions are modified to phosphoserine: Ser-560, Ser-576, Ser-579, Ser-581, Ser-591, Ser-594, and Ser-601. Basic residues predominate over residues 601-610 (SVRKRRVRKD).

Belongs to the calreticulin family. Interacts with PPIB. Interacts with ADAM2. Interacts with PDILT. In terms of tissue distribution, detected in testis (at protein level). Detected in testis.

The protein localises to the endoplasmic reticulum membrane. Functionally, functions during spermatogenesis as a chaperone for a range of client proteins that are important for sperm adhesion onto the egg zona pellucida and for subsequent penetration of the zona pellucida. Required for normal sperm migration from the uterus into the oviduct. Required for normal male fertility. Binds calcium ions. This Homo sapiens (Human) protein is Calmegin (CLGN).